The primary structure comprises 1374 residues: Sterol 3-beta-glucosyltransferase (1374 aa).

Basic and acidic residues predominate over residues 1 to 14; that stretch reads MRPLRDDAKRRADR. Disordered regions lie at residues 1-60, 83-190, and 206-227; these read MRPL…RDGN, ARFD…PRAA, and TSAT…QPQS. Over residues 16–28 the composition is skewed to polar residues; sequence LSASMKPTSSNRP. Residues 29–41 show a composition bias toward basic and acidic residues; that stretch reads FSDRVPDRFKDGD. The segment covering 101–112 has biased composition (polar residues); the sequence is VEQTTGKASSRT. A compositionally biased stretch (basic and acidic residues) spans 125–138; sequence KRSEPSKLVLEERG. In terms of domain architecture, GRAM 1 spans 234–283; that stretch reads MRLMKMFEFAKPEKVLVEYACSLLQSMLLQGYMYVTEGHICFYAYLPKKS. The 98-residue stretch at 285–382 folds into the PH domain; that stretch reads VAIKSGYLSK…WVKALQQVIF (98 aa). The interval 458 to 538 is disordered; that stretch reads ATKEAQDQHD…SMTDTTESAS (81 aa). 2 stretches are compositionally biased toward basic and acidic residues: residues 461–473 and 490–499; these read EAQD…HQPE and SDQRREDSPR. Residues 503–538 are compositionally biased toward polar residues; the sequence is SSVGNENQGSADSFAEQGTGSSPIIQSMTDTTESAS. In terms of domain architecture, GRAM 2 spans 704 to 770; that stretch reads DRFRAHFALP…KDIENVEKEK (67 aa). Ser893, Arg894, Asp896, Ala1196, His1198, His1211, Gly1215, Thr1216, Asp1235, and Gln1236 together coordinate UDP-alpha-D-glucose. Over residues 1314–1325 the composition is skewed to polar residues; it reads ASSTPFSPTPTA. Residues 1314 to 1338 form a disordered region; that stretch reads ASSTPFSPTPTAKASPDGGDDDLDD.

Belongs to the glycosyltransferase 28 family.

Its subcellular location is the cytoplasm. The protein localises to the preautophagosomal structure membrane. The enzyme catalyses a sterol + UDP-alpha-D-glucose = a sterol 3-beta-D-glucoside + UDP + H(+). It catalyses the reaction ergosterol + UDP-alpha-D-glucose = ergosteryl 3-beta-D-glucoside + UDP + H(+). In terms of biological role, sterol glycosyltransferase responsible for the glycosylation of ergosterol to form ergosterol-glucoside. This chain is Sterol 3-beta-glucosyltransferase, found in Penicillium rubens (strain ATCC 28089 / DSM 1075 / NRRL 1951 / Wisconsin 54-1255) (Penicillium chrysogenum).